We begin with the raw amino-acid sequence, 28 residues long: N-acetyl-D-galactosamine-binding lectin subunit A (28 aa).

It belongs to the ribosome-inactivating protein family. Disulfide-linked heterodimer of A and B chains.

It carries out the reaction Endohydrolysis of the N-glycosidic bond at one specific adenosine on the 28S rRNA.. Its function is as follows. Gal / GalNAc-specific lectin. Agglutinates both native and trypsin-treated rabbit erythrocytes but not human erythrocytes irrespective of blood group type. The protein is N-acetyl-D-galactosamine-binding lectin subunit A of Iris hollandica (Dutch iris).